Here is a 418-residue protein sequence, read N- to C-terminus: UDP-N-acetylglucosamine 1-carboxyvinyltransferase (418 aa).

Residue lysine 22 to asparagine 23 participates in phosphoenolpyruvate binding. Arginine 92 provides a ligand contact to UDP-N-acetyl-alpha-D-glucosamine. Cysteine 116 functions as the Proton donor in the catalytic mechanism. The residue at position 116 (cysteine 116) is a 2-(S-cysteinyl)pyruvic acid O-phosphothioketal. Aspartate 305 and isoleucine 327 together coordinate UDP-N-acetyl-alpha-D-glucosamine.

The protein belongs to the EPSP synthase family. MurA subfamily.

The protein localises to the cytoplasm. The catalysed reaction is phosphoenolpyruvate + UDP-N-acetyl-alpha-D-glucosamine = UDP-N-acetyl-3-O-(1-carboxyvinyl)-alpha-D-glucosamine + phosphate. Its pathway is cell wall biogenesis; peptidoglycan biosynthesis. Cell wall formation. Adds enolpyruvyl to UDP-N-acetylglucosamine. This is UDP-N-acetylglucosamine 1-carboxyvinyltransferase from Gluconobacter oxydans (strain 621H) (Gluconobacter suboxydans).